A 302-amino-acid polypeptide reads, in one-letter code: Sulfate adenylyltransferase subunit 2 (302 aa).

It belongs to the PAPS reductase family. CysD subfamily. Heterodimer composed of CysD, the smaller subunit, and CysN.

It carries out the reaction sulfate + ATP + H(+) = adenosine 5'-phosphosulfate + diphosphate. Its pathway is sulfur metabolism; hydrogen sulfide biosynthesis; sulfite from sulfate: step 1/3. With CysN forms the ATP sulfurylase (ATPS) that catalyzes the adenylation of sulfate producing adenosine 5'-phosphosulfate (APS) and diphosphate, the first enzymatic step in sulfur assimilation pathway. APS synthesis involves the formation of a high-energy phosphoric-sulfuric acid anhydride bond driven by GTP hydrolysis by CysN coupled to ATP hydrolysis by CysD. The sequence is that of Sulfate adenylyltransferase subunit 2 from Sodalis glossinidius (strain morsitans).